Here is a 179-residue protein sequence, read N- to C-terminus: Stathmin-2 (179 aa).

The segment at 1–26 (MAKTAMAYKEKMKELSMLSLICSCFY) is membrane attachment. Phosphoserine is present on serine 16. 2 S-palmitoyl cysteine lipidation sites follow: cysteine 22 and cysteine 24. Residues 38-179 (DDMEVKQINK…NKELQVELSG (142 aa)) form the SLD domain. Residues 39 to 96 (DMEVKQINKRASGQAFELILKPPSPISEAPRTLASPKKKDLSLEEIQKKLEAAEERRK) form a regulatory/phosphorylation domain region. 4 positions are modified to phosphoserine: serine 50, serine 62, serine 73, and serine 97. The stretch at 75 to 179 (KKKDLSLEEI…NKELQVELSG (105 aa)) forms a coiled coil.

This sequence belongs to the stathmin family. Interacts with MAPK8. Interacts with ITM2C. Interacts with KIFBP. Interacts (via the N-terminal region) with CIB1 (via C-terminal region); the interaction is direct, occurs in a calcium-dependent manner and attenuates the neurite outgrowth inhibition of STMN2. Post-translationally, sumoylated. In terms of processing, phosphorylated mostly by MAPK8, but also by MAPK9 and MAPK10 in the developing brain cortex. N-terminal palmitoylation promotes specific anchoring to the cytosolic leaflet of Golgi membranes and subsequent vesicular trafficking along dendrites and axons. Neuronal Stathmins are substrates for palmitoyltransferases ZDHHC3, ZDHHC7 and ZDHHC15. As to expression, neuron specific.

The protein localises to the cytoplasm. It is found in the perinuclear region. The protein resides in the cell projection. It localises to the growth cone. Its subcellular location is the membrane. The protein localises to the axon. It is found in the golgi apparatus. The protein resides in the endosome. It localises to the lamellipodium. In terms of biological role, regulator of microtubule stability. When phosphorylated by MAPK8, stabilizes microtubules and consequently controls neurite length in cortical neurons. In the developing brain, negatively regulates the rate of exit from multipolar stage and retards radial migration from the ventricular zone. This chain is Stathmin-2 (STMN2), found in Homo sapiens (Human).